Here is a 301-residue protein sequence, read N- to C-terminus: Putative ribosomal RNA methyltransferase PB17E12.10c (301 aa).

Residues G87, W89, D107, and D186 each coordinate S-adenosyl-L-methionine. K247 functions as the Proton acceptor in the catalytic mechanism.

This sequence belongs to the class I-like SAM-binding methyltransferase superfamily. RNA methyltransferase RlmE family.

It carries out the reaction a uridine in rRNA + S-adenosyl-L-methionine = a 2'-O-methyluridine in rRNA + S-adenosyl-L-homocysteine + H(+). This Schizosaccharomyces pombe (strain 972 / ATCC 24843) (Fission yeast) protein is Putative ribosomal RNA methyltransferase PB17E12.10c.